The chain runs to 319 residues: 7,8-didemethyl-8-hydroxy-5-deazariboflavin synthase (319 aa).

The 231-residue stretch at 6–236 folds into the Radical SAM core domain; that stretch reads VTYSPAFTLV…AEITIQIPPN (231 aa). Positions 20, 24, and 27 each coordinate [4Fe-4S] cluster.

It belongs to the radical SAM superfamily. CofG family. Consists of two subunits, CofG and CofH. It depends on [4Fe-4S] cluster as a cofactor.

It catalyses the reaction 5-amino-5-(4-hydroxybenzyl)-6-(D-ribitylimino)-5,6-dihydrouracil + S-adenosyl-L-methionine = 7,8-didemethyl-8-hydroxy-5-deazariboflavin + 5'-deoxyadenosine + L-methionine + NH4(+) + H(+). It participates in cofactor biosynthesis; coenzyme F0 biosynthesis. Catalyzes the radical-mediated synthesis of 7,8-didemethyl-8-hydroxy-5-deazariboflavin from 5-amino-5-(4-hydroxybenzyl)-6-(D-ribitylimino)-5,6-dihydrouracil. The protein is 7,8-didemethyl-8-hydroxy-5-deazariboflavin synthase of Gloeobacter violaceus (strain ATCC 29082 / PCC 7421).